The following is a 795-amino-acid chain: uncharacterized protein (795 aa).

A coiled-coil region spans residues 228–280; it reads NIICFKNKCKNNEKEKKEEEEDHDHDHDDKKKEKEDKEKEEEEEEEDSNDDFE. Disordered regions lie at residues 242-278, 326-430, 455-484, and 673-743; these read EKKE…SNDD, TTTT…TPNR, INQQ…KSEP, and NNNN…NENE. Over residues 251-264 the composition is skewed to basic and acidic residues; that stretch reads DHDHDDKKKEKEDK. Residues 265 to 278 show a composition bias toward acidic residues; the sequence is EKEEEEEEEDSNDD. A compositionally biased stretch (low complexity) spans 326 to 345; that stretch reads TTTTTVNGSKNSSNTTTPIT. Positions 362 to 373 are enriched in acidic residues; sequence DDDDDDDLTDED. Polar residues predominate over residues 377–398; sequence HNEIYSTSPKVSHSTFCQSSPT. Low complexity-rich tracts occupy residues 399–414, 455–480, and 673–729; these read LLDL…QQQQ, INQQ…SSNI, and NNNN…NQNE. Positions 732–743 are enriched in basic and acidic residues; it reads NENKNENENENE.

This is an uncharacterized protein from Dictyostelium discoideum (Social amoeba).